A 318-amino-acid polypeptide reads, in one-letter code: tRNA-dihydrouridine(16) synthase (318 aa).

Residues 7-9 and Gln-68 each bind FMN; that span reads PME. Cys-98 functions as the Proton donor in the catalytic mechanism. FMN contacts are provided by residues Lys-139, 200–202, and 224–225; these read NGE and CR.

The protein belongs to the Dus family. DusC subfamily. The cofactor is FMN.

The catalysed reaction is 5,6-dihydrouridine(16) in tRNA + NADP(+) = uridine(16) in tRNA + NADPH + H(+). The enzyme catalyses 5,6-dihydrouridine(16) in tRNA + NAD(+) = uridine(16) in tRNA + NADH + H(+). Functionally, catalyzes the synthesis of 5,6-dihydrouridine (D), a modified base found in the D-loop of most tRNAs, via the reduction of the C5-C6 double bond in target uridines. Specifically modifies U16 in tRNAs. This Vibrio vulnificus (strain CMCP6) protein is tRNA-dihydrouridine(16) synthase.